Consider the following 689-residue polypeptide: uncharacterized protein (689 aa).

Position 566 (serine 566) interacts with substrate. The active-site Proton acceptor is the tyrosine 579.

Belongs to the short-chain dehydrogenases/reductases (SDR) family.

This is an uncharacterized protein from Bacillus subtilis (strain 168).